A 361-amino-acid polypeptide reads, in one-letter code: Peptide chain release factor 1 (361 aa).

Q237 is subject to N5-methylglutamine.

The protein belongs to the prokaryotic/mitochondrial release factor family. Methylated by PrmC. Methylation increases the termination efficiency of RF1.

The protein localises to the cytoplasm. Its function is as follows. Peptide chain release factor 1 directs the termination of translation in response to the peptide chain termination codons UAG and UAA. The sequence is that of Peptide chain release factor 1 from Thioalkalivibrio sulfidiphilus (strain HL-EbGR7).